We begin with the raw amino-acid sequence, 252 residues long: Large ribosomal subunit protein uL29m (252 aa).

The N-terminal 39 residues, 1-39, are a transit peptide targeting the mitochondrion; sequence MSTSTVIRPVARSLLQLRKAGNTPPAFLLPCLQSSSTTS. Residues 233–242 are compositionally biased toward acidic residues; sequence EDVLAEAEGE. Residues 233–252 form a disordered region; it reads EDVLAEAEGEAEPKPAQVTA.

Belongs to the universal ribosomal protein uL29 family. Component of the mitochondrial large ribosomal subunit. Mature mitochondrial ribosomes consist of a small (37S) and a large (54S) subunit. The 37S subunit contains at least 33 different proteins and 1 molecule of RNA (15S). The 54S subunit contains at least 45 different proteins and 1 molecule of RNA (21S).

The protein localises to the mitochondrion. In Botryotinia fuckeliana (strain B05.10) (Noble rot fungus), this protein is Large ribosomal subunit protein uL29m (mrpl4).